Reading from the N-terminus, the 63-residue chain is Small ribosomal subunit protein eS17 (63 aa).

This sequence belongs to the eukaryotic ribosomal protein eS17 family.

This Methanococcus aeolicus (strain ATCC BAA-1280 / DSM 17508 / OCM 812 / Nankai-3) protein is Small ribosomal subunit protein eS17.